We begin with the raw amino-acid sequence, 388 residues long: Ribosomal RNA large subunit methyltransferase F (388 aa).

A compositionally biased stretch (polar residues) spans 1 to 22 (MKTNNHNAKQAQTKTAKSNPSK). Residues 1-51 (MKTNNHNAKQAQTKTAKSNPSKEVTKIKPKRVKNKPTAKAAKSTGLKTNAA) form a disordered region. Residues 27–36 (IKPKRVKNKP) are compositionally biased toward basic residues.

This sequence belongs to the methyltransferase superfamily. METTL16/RlmF family.

It is found in the cytoplasm. The catalysed reaction is adenosine(1618) in 23S rRNA + S-adenosyl-L-methionine = N(6)-methyladenosine(1618) in 23S rRNA + S-adenosyl-L-homocysteine + H(+). Specifically methylates the adenine in position 1618 of 23S rRNA. This Vibrio campbellii (strain ATCC BAA-1116) protein is Ribosomal RNA large subunit methyltransferase F.